The sequence spans 807 residues: Microbial collagenase (807 aa).

The N-terminal stretch at 1 to 27 (MSHLLPFPRRRLALACLLASISGASFG) is a signal peptide. His-434 is a binding site for Zn(2+). The active site involves Glu-435. His-438 lines the Zn(2+) pocket. The interval 562-585 (EVTPENPDTDPDTPTEPSDGVTQL) is disordered.

This sequence belongs to the peptidase M9A family. It depends on Zn(2+) as a cofactor.

The protein localises to the secreted. The enzyme catalyses Digestion of native collagen in the triple helical region at Xaa-|-Gly bonds. With synthetic peptides, a preference is shown for Gly at P3 and P1', Pro and Ala at P2 and P2', and hydroxyproline, Ala or Arg at P3'.. Its function is as follows. Possesses gelatinolytic activity. This chain is Microbial collagenase, found in Vibrio vulnificus (strain CMCP6).